The primary structure comprises 388 residues: GTPase Obg (388 aa).

An Obg domain is found at 1-159; it reads MKFVDEAVIR…RSLKLELLLL (159 aa). The region spanning 160 to 333 is the OBG-type G domain; the sequence is ADVGLLGMPN…LAAKLWDFIQ (174 aa). Residues 166-173, 191-195, 213-216, 283-286, and 314-316 each bind GTP; these read GMPNAGKS, FTTLV, DIPG, NKAD, and SAY. Residues serine 173 and threonine 193 each contribute to the Mg(2+) site.

Belongs to the TRAFAC class OBG-HflX-like GTPase superfamily. OBG GTPase family. Monomer. Mg(2+) is required as a cofactor.

It localises to the cytoplasm. In terms of biological role, an essential GTPase which binds GTP, GDP and possibly (p)ppGpp with moderate affinity, with high nucleotide exchange rates and a fairly low GTP hydrolysis rate. Plays a role in control of the cell cycle, stress response, ribosome biogenesis and in those bacteria that undergo differentiation, in morphogenesis control. This is GTPase Obg from Shewanella oneidensis (strain ATCC 700550 / JCM 31522 / CIP 106686 / LMG 19005 / NCIMB 14063 / MR-1).